The sequence spans 310 residues: Nucleotide-binding protein Ddes_0972 (310 aa).

30-37 serves as a coordination point for ATP; it reads GLSGAGKS. 82–85 is a GTP binding site; it reads DLRQ.

Belongs to the RapZ-like family.

Its function is as follows. Displays ATPase and GTPase activities. The polypeptide is Nucleotide-binding protein Ddes_0972 (Desulfovibrio desulfuricans (strain ATCC 27774 / DSM 6949 / MB)).